A 102-amino-acid polypeptide reads, in one-letter code: NADH-quinone oxidoreductase subunit K (102 aa).

3 consecutive transmembrane segments (helical) span residues 5–25, 30–50, and 63–83; these read ALTG…FGVL, ILFQ…AFIA, and MFVL…ALFL.

It belongs to the complex I subunit 4L family. As to quaternary structure, NDH-1 is composed of 14 different subunits. Subunits NuoA, H, J, K, L, M, N constitute the membrane sector of the complex.

Its subcellular location is the cell inner membrane. It carries out the reaction a quinone + NADH + 5 H(+)(in) = a quinol + NAD(+) + 4 H(+)(out). Its function is as follows. NDH-1 shuttles electrons from NADH, via FMN and iron-sulfur (Fe-S) centers, to quinones in the respiratory chain. The immediate electron acceptor for the enzyme in this species is believed to be ubiquinone. Couples the redox reaction to proton translocation (for every two electrons transferred, four hydrogen ions are translocated across the cytoplasmic membrane), and thus conserves the redox energy in a proton gradient. The chain is NADH-quinone oxidoreductase subunit K from Rhodopseudomonas palustris (strain BisB18).